The chain runs to 71 residues: Long neurotoxin 1 (71 aa).

5 disulfide bridges follow: C3–C20, C14–C41, C26–C30, C45–C56, and C57–C62.

The protein belongs to the three-finger toxin family. Long-chain subfamily. Type II alpha-neurotoxin sub-subfamily. In terms of tissue distribution, expressed by the venom gland.

The protein localises to the secreted. Its function is as follows. Binds with high affinity to muscular (alpha-1/CHRNA1) and neuronal (alpha-7/CHRNA7) nicotinic acetylcholine receptor (nAChR) and inhibits acetylcholine from binding to the receptor, thereby impairing neuromuscular and neuronal transmission. This Naja haje haje (Egyptian cobra) protein is Long neurotoxin 1.